We begin with the raw amino-acid sequence, 72 residues long: Penaeidin-2d (72 aa).

The signal sequence occupies residues 1–21 (MRLVVCLVFLASFALVCQGGA). A Pyrrolidone carboxylic acid modification is found at Gln22. Cystine bridges form between Cys45–Cys59, Cys48–Cys66, and Cys60–Cys67. Lys71 is modified (lysine amide).

It belongs to the penaeidin family.

It localises to the cytoplasmic granule. In terms of biological role, antibacterial and antifungal activity. Presents chitin-binding activity. This Penaeus setiferus (Atlantic white shrimp) protein is Penaeidin-2d.